Reading from the N-terminus, the 534-residue chain is Steroid hormone receptor family member cnr14 (534 aa).

Disordered regions lie at residues 30–53 (SGKT…QWSH) and 119–139 (PATS…GHTT). A compositionally biased stretch (low complexity) spans 119-130 (PATSVTSSLSPP). A DNA-binding region (nuclear receptor) is located at residues 148–223 (ISFCKVCGDK…SGMSKDSVRQ (76 aa)). 2 NR C4-type zinc fingers span residues 151–171 (CKVC…CEGC) and 187–211 (CLKQ…FKKC). In terms of domain architecture, NR LBD spans 252 to 493 (EVDAVYEAVL…PPLVVEMFQL (242 aa)). Residues 502 to 534 (HNNQENQYTPAPEHQSPQPQQPTPNQQQTPVHC) are disordered. The span at 511 to 534 (PAPEHQSPQPQQPTPNQQQTPVHC) shows a compositional bias: low complexity.

The protein belongs to the nuclear hormone receptor family. NR1 subfamily. Most abundant in embryos.

It localises to the nucleus. Functionally, transcriptional regulator which is involved in the sex determination and X chromosome dosage compensation pathways. Directly binds to five 5'-A(G/C)(G/T)(T/G)C(A/G)-3' sites in the promoter of sex-determining factor xol-1 to negatively regulate its expression and promote hermaphrodite development. Together with fox-1 is involved in making the distinction between one and two X-chromosomes. Plays a role in the fox-1-mediated repression of the functionally active isoform (isoform b) of the sex-determining factor xol-1 gene to promote hermaphrodite development. Plays a role in the association of the dosage compensation complex proteins dpy-27 and sdc-3 with the hermaphrodite X chromosomes. In Caenorhabditis elegans, this protein is Steroid hormone receptor family member cnr14.